A 128-amino-acid chain; its full sequence is Large ribosomal subunit protein bL20 (128 aa).

The protein belongs to the bacterial ribosomal protein bL20 family.

Its function is as follows. Binds directly to 23S ribosomal RNA and is necessary for the in vitro assembly process of the 50S ribosomal subunit. It is not involved in the protein synthesizing functions of that subunit. The polypeptide is Large ribosomal subunit protein bL20 (Micrococcus luteus (strain ATCC 4698 / DSM 20030 / JCM 1464 / CCM 169 / CCUG 5858 / IAM 1056 / NBRC 3333 / NCIMB 9278 / NCTC 2665 / VKM Ac-2230) (Micrococcus lysodeikticus)).